The sequence spans 322 residues: Ubiquitin-conjugating enzyme E2 U (322 aa).

Residues 4–153 (RAYLLLQRDF…LKLFNRPLQM (150 aa)) enclose the UBC core domain. The active-site Glycyl thioester intermediate is the Cys-89.

Belongs to the ubiquitin-conjugating enzyme family. Post-translationally, autoubiquitinated in vitro in the presence of UBR5.

The enzyme catalyses S-ubiquitinyl-[E1 ubiquitin-activating enzyme]-L-cysteine + [E2 ubiquitin-conjugating enzyme]-L-cysteine = [E1 ubiquitin-activating enzyme]-L-cysteine + S-ubiquitinyl-[E2 ubiquitin-conjugating enzyme]-L-cysteine.. Its pathway is protein modification; protein ubiquitination. Its function is as follows. Catalyzes the covalent attachment of ubiquitin to other proteins. The sequence is that of Ubiquitin-conjugating enzyme E2 U (UBE2U) from Macaca fascicularis (Crab-eating macaque).